The chain runs to 440 residues: 3-phosphoshikimate 1-carboxyvinyltransferase (440 aa).

The 3-phosphoshikimate site is built by lysine 29 and arginine 34. Residue lysine 29 participates in phosphoenolpyruvate binding. Phosphoenolpyruvate is bound by residues glycine 99 and arginine 128. The 3-phosphoshikimate site is built by serine 171, serine 172, glutamine 173, serine 199, aspartate 316, and lysine 343. Residue glutamine 173 coordinates phosphoenolpyruvate. The active-site Proton acceptor is the aspartate 316. 3 residues coordinate phosphoenolpyruvate: arginine 347, arginine 390, and lysine 416.

Belongs to the EPSP synthase family. As to quaternary structure, monomer.

Its subcellular location is the cytoplasm. It catalyses the reaction 3-phosphoshikimate + phosphoenolpyruvate = 5-O-(1-carboxyvinyl)-3-phosphoshikimate + phosphate. Its pathway is metabolic intermediate biosynthesis; chorismate biosynthesis; chorismate from D-erythrose 4-phosphate and phosphoenolpyruvate: step 6/7. Catalyzes the transfer of the enolpyruvyl moiety of phosphoenolpyruvate (PEP) to the 5-hydroxyl of shikimate-3-phosphate (S3P) to produce enolpyruvyl shikimate-3-phosphate and inorganic phosphate. The protein is 3-phosphoshikimate 1-carboxyvinyltransferase of Deinococcus geothermalis (strain DSM 11300 / CIP 105573 / AG-3a).